Reading from the N-terminus, the 276-residue chain is 4-chlorobenzoyl coenzyme A dehalogenase-2 (276 aa).

66–71 (AGFDLE) provides a ligand contact to substrate. The Proton acceptor role is filled by His93. Residue Gly117 participates in substrate binding. Asp148 (nucleophile) is an active-site residue. A substrate-binding site is contributed by Arg261.

Belongs to the enoyl-CoA hydratase/isomerase family. In terms of assembly, homotetramer.

The catalysed reaction is 4-chlorobenzoyl-CoA + H2O = 4-hydroxybenzoyl-CoA + chloride + H(+). It functions in the pathway xenobiotic degradation; 4-chlorobenzoate degradation; 4-hydroxybenzoate from 4-chlorobenzoate: step 2/3. Functionally, dehalogenates 4-chlorobenzoyl-CoA, 4-iodobenzoyl-CoA, 4-bromobenzoyl-CoA and, at a slower rate, 4-fluorobenzoyl-CoA. Does not dehalogenate 2-chlorobenzoyl-CoA or 3-chlorobenzoyl-CoA. In Arthrobacter sp, this protein is 4-chlorobenzoyl coenzyme A dehalogenase-2.